The sequence spans 511 residues: UPF0288 protein MK0796 (511 aa).

Belongs to the UPF0288 family.

In Methanopyrus kandleri (strain AV19 / DSM 6324 / JCM 9639 / NBRC 100938), this protein is UPF0288 protein MK0796.